The following is a 248-amino-acid chain: Thioredoxin-like protein AAED1, chloroplastic (248 aa).

The transit peptide at 1–52 (MAIALSSSSTITSITLQPKLKTIHGLGTVLPGYSVKSHFRSVSLRRSAVVVS) directs the protein to the chloroplast. An N-acetylalanine modification is found at A53.

The protein belongs to the peroxiredoxin-like PRXL2 family. PRXL2C subfamily.

It is found in the plastid. The protein resides in the chloroplast. This chain is Thioredoxin-like protein AAED1, chloroplastic, found in Arabidopsis thaliana (Mouse-ear cress).